The primary structure comprises 100 residues: NADH-quinone oxidoreductase subunit K (100 aa).

3 helical membrane-spanning segments follow: residues 4-24, 28-48, and 60-80; these read LQHGLILAAILFVLGLTGLLI, LLFMLISLEVMINAAALAFVV, and VMYILAITLAAAEASIGLALL.

Belongs to the complex I subunit 4L family. As to quaternary structure, NDH-1 is composed of 13 different subunits. Subunits NuoA, H, J, K, L, M, N constitute the membrane sector of the complex.

It localises to the cell inner membrane. The catalysed reaction is a quinone + NADH + 5 H(+)(in) = a quinol + NAD(+) + 4 H(+)(out). NDH-1 shuttles electrons from NADH, via FMN and iron-sulfur (Fe-S) centers, to quinones in the respiratory chain. The immediate electron acceptor for the enzyme in this species is believed to be ubiquinone. Couples the redox reaction to proton translocation (for every two electrons transferred, four hydrogen ions are translocated across the cytoplasmic membrane), and thus conserves the redox energy in a proton gradient. This Yersinia pseudotuberculosis serotype O:1b (strain IP 31758) protein is NADH-quinone oxidoreductase subunit K.